Here is a 114-residue protein sequence, read N- to C-terminus: MYPFYKYIFSFWFFFLVEYVVTFRLFLSLKSGNIFLSTQQRFKDATKMCFHHQMLSSSVEPFFSLYFNHVPYMWSCFNFFSSSPFPRCTKNSPEKKKFKRGLPISSKYTDGKKR.

The chain crosses the membrane as a helical span at residues Tyr7–Leu27. Positions Lys90–Arg114 are disordered.

The protein resides in the membrane. This is an uncharacterized protein from Saccharomyces cerevisiae (strain ATCC 204508 / S288c) (Baker's yeast).